The sequence spans 601 residues: Ubiquitin carboxyl-terminal hydrolase MINDY-2 (601 aa).

A disordered region spans residues 1 to 205 (MENSPDSPQP…LCKEEEEDPA (205 aa)). The segment covering 24–34 (EGRRRGGREAE) has biased composition (basic and acidic residues). Position 62 is a phosphothreonine (T62). Phosphoserine is present on S82. Low complexity-rich tracts occupy residues 127–141 (EEPS…SCSE), 148–169 (SPSL…SSEF), and 186–195 (GAAGPPRAAP). The Nucleophile role is filled by C244. The active-site Proton acceptor is H426. The interval 485 to 537 (GQQDQIDQDYLMALSLQQEQQSQEINWEQIPEGISDLELAKKLQEEEDRRASQ) is ubiquitin-binding domain (UBD). Residues 534 to 601 (RASQYYQEQE…EKEKNSCVIL (68 aa)) form a disordered region. Low complexity predominate over residues 536 to 570 (SQYYQEQEQAQAVVTTTTPSTQAQQGQPAQASPSS). Residues 577 to 601 (SERKRKEPREKDKEKEKEKNSCVIL) are compositionally biased toward basic and acidic residues.

Belongs to the MINDY deubiquitinase family. FAM63 subfamily.

The enzyme catalyses Thiol-dependent hydrolysis of ester, thioester, amide, peptide and isopeptide bonds formed by the C-terminal Gly of ubiquitin (a 76-residue protein attached to proteins as an intracellular targeting signal).. Functionally, hydrolase that can remove 'Lys-48'-linked conjugated ubiquitin from proteins. Can also bind to polyubiquitin chains of different linkage types, including 'Lys-6', 'Lys-11', 'Lys-29', 'Lys-33' and 'Lys-63'. May play a regulatory role at the level of protein turnover. The protein is Ubiquitin carboxyl-terminal hydrolase MINDY-2 (Mindy2) of Mus musculus (Mouse).